A 132-amino-acid chain; its full sequence is Small ribosomal subunit protein uS8 (132 aa).

It belongs to the universal ribosomal protein uS8 family. As to quaternary structure, part of the 30S ribosomal subunit. Contacts proteins S5 and S12.

In terms of biological role, one of the primary rRNA binding proteins, it binds directly to 16S rRNA central domain where it helps coordinate assembly of the platform of the 30S subunit. The chain is Small ribosomal subunit protein uS8 from Oceanobacillus iheyensis (strain DSM 14371 / CIP 107618 / JCM 11309 / KCTC 3954 / HTE831).